The primary structure comprises 233 residues: Phosphatidylserine decarboxylase proenzyme (233 aa).

The Schiff-base intermediate with substrate; via pyruvic acid role is filled by serine 190. Serine 190 carries the post-translational modification Pyruvic acid (Ser); by autocatalysis.

Belongs to the phosphatidylserine decarboxylase family. PSD-A subfamily. As to quaternary structure, heterodimer of a large membrane-associated beta subunit and a small pyruvoyl-containing alpha subunit. Requires pyruvate as cofactor. In terms of processing, is synthesized initially as an inactive proenzyme. Formation of the active enzyme involves a self-maturation process in which the active site pyruvoyl group is generated from an internal serine residue via an autocatalytic post-translational modification. Two non-identical subunits are generated from the proenzyme in this reaction, and the pyruvate is formed at the N-terminus of the alpha chain, which is derived from the carboxyl end of the proenzyme. The post-translation cleavage follows an unusual pathway, termed non-hydrolytic serinolysis, in which the side chain hydroxyl group of the serine supplies its oxygen atom to form the C-terminus of the beta chain, while the remainder of the serine residue undergoes an oxidative deamination to produce ammonia and the pyruvoyl prosthetic group on the alpha chain.

Its subcellular location is the cell membrane. The catalysed reaction is a 1,2-diacyl-sn-glycero-3-phospho-L-serine + H(+) = a 1,2-diacyl-sn-glycero-3-phosphoethanolamine + CO2. It functions in the pathway phospholipid metabolism; phosphatidylethanolamine biosynthesis; phosphatidylethanolamine from CDP-diacylglycerol: step 2/2. In terms of biological role, catalyzes the formation of phosphatidylethanolamine (PtdEtn) from phosphatidylserine (PtdSer). The polypeptide is Phosphatidylserine decarboxylase proenzyme (Azorhizobium caulinodans (strain ATCC 43989 / DSM 5975 / JCM 20966 / LMG 6465 / NBRC 14845 / NCIMB 13405 / ORS 571)).